Reading from the N-terminus, the 415-residue chain is MNEVVAKGKKAKEIARELVLKSTNQKNEALAAIADQMIVETAYILEENKRDIEEGKAKGFSDSLLDRLMLNEQRIIDMAEGIKQLIELRDPVGECVSAWERPNGLSIQEMRVPLGVVGMIYEARPNVTVDAATICLKTGNAVILRGSSSAINSNKAIVSVIHRALKQTSLPPESVQLIEDTTRDSAKQLFTLNEYLDVLIPRGGKQLIDTVVREASVPVLETGAGNCHIFIDETADKQMAFNIIINAKTQRPSVCNAIETIVLHEKWAQQFGSELFSSLKERGVELRGDSKSLAIDSSIALASEEDWETEFLSLTLAVKVVSTTEEAIHHINTYGSMHSEAIITENEENVSKFFTSVDAAALYHNASTRFTDGSEFGFGAEIGISTQKLHVRGPMGLPALTSTKYVIRGNGQIRR.

The protein belongs to the gamma-glutamyl phosphate reductase family.

It localises to the cytoplasm. It carries out the reaction L-glutamate 5-semialdehyde + phosphate + NADP(+) = L-glutamyl 5-phosphate + NADPH + H(+). The protein operates within amino-acid biosynthesis; L-proline biosynthesis; L-glutamate 5-semialdehyde from L-glutamate: step 2/2. Catalyzes the NADPH-dependent reduction of L-glutamate 5-phosphate into L-glutamate 5-semialdehyde and phosphate. The product spontaneously undergoes cyclization to form 1-pyrroline-5-carboxylate. The chain is Gamma-glutamyl phosphate reductase from Bacillus mycoides (strain KBAB4) (Bacillus weihenstephanensis).